The sequence spans 68 residues: Large ribosomal subunit protein bL32 (68 aa).

The protein belongs to the bacterial ribosomal protein bL32 family.

The chain is Large ribosomal subunit protein bL32 from Aster yellows witches'-broom phytoplasma (strain AYWB).